We begin with the raw amino-acid sequence, 202 residues long: Endothelin-1 (202 aa).

Residues 1–23 form the signal peptide; the sequence is MDYFSMMVSLLLVAFHGAPETAA. A disordered region spans residues 24–49; sequence SGTELSTGAENPGEKPPASAPWRPRR. A propeptide spanning residues 24-50 is cleaved from the precursor; that stretch reads SGTELSTGAENPGEKPPASAPWRPRRS. Cystine bridges form between C53/C67 and C55/C63. Positions 74-202 are excised as a propeptide; it reads VNTPGHIVPY…EQKVTHNRTH (129 aa). Positions 110–124 are endothelin-like; that stretch reads CQCTSPHDKKCWNFC.

The protein belongs to the endothelin/sarafotoxin family.

It localises to the secreted. Endothelins are endothelium-derived vasoconstrictor peptides. Probable ligand for G-protein coupled receptors EDNRA and EDNRB which activates PTK2B, BCAR1, BCAR3 and, GTPases RAP1 and RHOA cascade in glomerular mesangial cells. Also binds the DEAR/FBXW7-AS1 receptor. Promotes mesenteric arterial wall remodeling via activation of ROCK signaling and subsequent colocalization of NFATC3 with F-actin filaments. NFATC3 then translocates to the nucleus where it subsequently promotes the transcription of the smooth muscle hypertrophy and differentiation marker ACTA2. The sequence is that of Endothelin-1 (EDN1) from Oryctolagus cuniculus (Rabbit).